Consider the following 339-residue polypeptide: Serpentine receptor class alpha-20 (339 aa).

The next 6 helical transmembrane spans lie at 30-50 (VSFV…VLAI), 113-132 (LYFY…SLTF), 151-171 (VSIS…YFGL), 199-219 (FRTT…YLNV), 249-269 (CILI…VNYI), and 284-304 (IAPF…VIYF).

Belongs to the nematode receptor-like protein sra family.

It localises to the membrane. This chain is Serpentine receptor class alpha-20 (sra-20), found in Caenorhabditis elegans.